A 252-amino-acid chain; its full sequence is Ribosomal RNA small subunit methyltransferase J (252 aa).

Residues 101 to 102 (RD), 117 to 118 (ER), 153 to 154 (SS), and D171 each bind S-adenosyl-L-methionine.

It belongs to the methyltransferase superfamily. RsmJ family.

It localises to the cytoplasm. It catalyses the reaction guanosine(1516) in 16S rRNA + S-adenosyl-L-methionine = N(2)-methylguanosine(1516) in 16S rRNA + S-adenosyl-L-homocysteine + H(+). In terms of biological role, specifically methylates the guanosine in position 1516 of 16S rRNA. This is Ribosomal RNA small subunit methyltransferase J from Salmonella typhimurium (strain LT2 / SGSC1412 / ATCC 700720).